We begin with the raw amino-acid sequence, 115 residues long: Chondroitin proteoglycan 8 (115 aa).

Positions 1-16 (MRPFILLALLVSVTVA) are cleaved as a signal peptide. Residues 33 to 96 (VRRTTRDASD…GSGAAEVTSV (64 aa)) are disordered. Serine 61, serine 63, serine 84, serine 88, and serine 109 each carry an O-linked (Xyl...) (chondroitin sulfate) serine glycan.

This is Chondroitin proteoglycan 8 from Caenorhabditis elegans.